Here is a 310-residue protein sequence, read N- to C-terminus: Porphobilinogen deaminase (310 aa).

An S-(dipyrrolylmethanemethyl)cysteine modification is found at Cys242.

The protein belongs to the HMBS family. In terms of assembly, monomer. Requires dipyrromethane as cofactor.

It carries out the reaction 4 porphobilinogen + H2O = hydroxymethylbilane + 4 NH4(+). Its pathway is porphyrin-containing compound metabolism; protoporphyrin-IX biosynthesis; coproporphyrinogen-III from 5-aminolevulinate: step 2/4. Functionally, tetrapolymerization of the monopyrrole PBG into the hydroxymethylbilane pre-uroporphyrinogen in several discrete steps. The chain is Porphobilinogen deaminase from Shewanella oneidensis (strain ATCC 700550 / JCM 31522 / CIP 106686 / LMG 19005 / NCIMB 14063 / MR-1).